Here is a 209-residue protein sequence, read N- to C-terminus: ATP synthase subunit O, mitochondrial (209 aa).

It belongs to the ATPase delta chain family. In terms of assembly, F-type ATPases have 2 components, CF(1) - the catalytic core - and CF(0) - the membrane proton channel. CF(1) has five subunits: alpha(3), beta(3), gamma(1), delta(1), epsilon(1). CF(0) has three main subunits: a, b and c.

The protein resides in the mitochondrion. The protein localises to the mitochondrion inner membrane. Its function is as follows. Mitochondrial membrane ATP synthase (F(1)F(0) ATP synthase or Complex V) produces ATP from ADP in the presence of a proton gradient across the membrane which is generated by electron transport complexes of the respiratory chain. F-type ATPases consist of two structural domains, F(1) - containing the extramembraneous catalytic core and F(0) - containing the membrane proton channel, linked together by a central stalk and a peripheral stalk. During catalysis, ATP synthesis in the catalytic domain of F(1) is coupled via a rotary mechanism of the central stalk subunits to proton translocation. Part of the complex F(0) domain and the peripheric stalk, which acts as a stator to hold the catalytic alpha(3)beta(3) subcomplex and subunit a/ATP6 static relative to the rotary elements. The chain is ATP synthase subunit O, mitochondrial from Drosophila melanogaster (Fruit fly).